The primary structure comprises 336 residues: UPF0324 membrane protein lp_2841 (336 aa).

9 helical membrane passes run 5-22, 26-48, 84-106, 116-138, 150-172, 204-226, 255-277, 282-304, and 311-333; these read GILP…ISQG, FVPA…NTFL, IGGF…ALWL, VRML…IAPV, ITLV…MAVF, TVQF…VLIF, WYVA…AIIG, TISS…LVNF, and LALY…ITLL.

It belongs to the UPF0324 family.

Its subcellular location is the cell membrane. In Lactiplantibacillus plantarum (strain ATCC BAA-793 / NCIMB 8826 / WCFS1) (Lactobacillus plantarum), this protein is UPF0324 membrane protein lp_2841.